The chain runs to 356 residues: Arginine kinase (356 aa).

A Phosphagen kinase N-terminal domain is found at 8 to 91; it reads EKLEAGFKKL…FDPIIEDYHG (84 aa). 64–68 is a substrate binding site; the sequence is GVGIY. The 238-residue stretch at 119-356 folds into the Phosphagen kinase C-terminal domain; sequence YVISTRVRCG…LELIKIEGSL (238 aa). ATP contacts are provided by residues 122-126 and H185; that span reads STRVR. Residue E225 coordinates substrate. R229 serves as a coordination point for ATP. C271 contacts substrate. ATP-binding positions include 280 to 284 and 309 to 314; these read RASVH and RGSTGE. Substrate is bound at residue E314.

The protein belongs to the ATP:guanido phosphotransferase family.

The enzyme catalyses L-arginine + ATP = N(omega)-phospho-L-arginine + ADP + H(+). In Schistocerca americana (American grasshopper), this protein is Arginine kinase (ARGK).